Reading from the N-terminus, the 432-residue chain is Adenylosuccinate synthetase (432 aa).

Residues 13–19 and 41–43 contribute to the GTP site; these read GDEGKGK and GHT. Asp14 functions as the Proton acceptor in the catalytic mechanism. Positions 14 and 41 each coordinate Mg(2+). Residues 14–17, 39–42, Thr130, Arg144, Gln225, Thr240, and Arg304 contribute to the IMP site; these read DEGK and NAGH. Residue His42 is the Proton donor of the active site. 300-306 is a binding site for substrate; that stretch reads ATTGRKR. GTP contacts are provided by residues Arg306, 332 to 334, and 415 to 417; these read KLD and STG.

Belongs to the adenylosuccinate synthetase family. In terms of assembly, homodimer. It depends on Mg(2+) as a cofactor.

Its subcellular location is the cytoplasm. The enzyme catalyses IMP + L-aspartate + GTP = N(6)-(1,2-dicarboxyethyl)-AMP + GDP + phosphate + 2 H(+). Its pathway is purine metabolism; AMP biosynthesis via de novo pathway; AMP from IMP: step 1/2. In terms of biological role, plays an important role in the de novo pathway of purine nucleotide biosynthesis. Catalyzes the first committed step in the biosynthesis of AMP from IMP. In Vibrio cholerae serotype O1 (strain M66-2), this protein is Adenylosuccinate synthetase.